The following is a 430-amino-acid chain: Asparagine--tRNA ligase (430 aa).

It belongs to the class-II aminoacyl-tRNA synthetase family. Homodimer.

It localises to the cytoplasm. It catalyses the reaction tRNA(Asn) + L-asparagine + ATP = L-asparaginyl-tRNA(Asn) + AMP + diphosphate + H(+). The sequence is that of Asparagine--tRNA ligase from Bacillus velezensis (strain DSM 23117 / BGSC 10A6 / LMG 26770 / FZB42) (Bacillus amyloliquefaciens subsp. plantarum).